The chain runs to 525 residues: Coronin-2A (525 aa).

WD repeat units lie at residues 24-71, 72-122, 123-170, 171-214, 215-259, 260-305, and 306-342; these read NCYD…TGKL, DPHY…RNLT, AYRK…SVIT, SPMS…AGTV, LQEA…DNLS, VPLM…ADKP, and HLSYLTEYRSYNPQKGIGVMPKRGLDVSSCEIFRFYK. Residues 485 to 524 adopt a coiled-coil conformation; that stretch reads QMFYRQQEEIRRLRELLTQREVQAKQLELEIKNLRMGSEQ.

This sequence belongs to the WD repeat coronin family. In terms of assembly, binds actin. Component of the N-Cor repressor complex, at least composed of NCOR1, NCOR2, HDAC3, TBL1X, TBL1R, CORO2A and GPS2.

This is Coronin-2A (CORO2A) from Homo sapiens (Human).